We begin with the raw amino-acid sequence, 542 residues long: Chaperonin GroEL (542 aa).

Residues 29–32 (TLGP), 86–90 (DGTTT), glycine 413, 476–478 (NAA), and aspartate 492 each bind ATP. Positions 521-542 (QPDENGPAAGPDMGMGGMGGMM) are disordered. Gly residues predominate over residues 533–542 (MGMGGMGGMM).

It belongs to the chaperonin (HSP60) family. In terms of assembly, forms a cylinder of 14 subunits composed of two heptameric rings stacked back-to-back. Interacts with the co-chaperonin GroES.

The protein localises to the cytoplasm. It catalyses the reaction ATP + H2O + a folded polypeptide = ADP + phosphate + an unfolded polypeptide.. In terms of biological role, together with its co-chaperonin GroES, plays an essential role in assisting protein folding. The GroEL-GroES system forms a nano-cage that allows encapsulation of the non-native substrate proteins and provides a physical environment optimized to promote and accelerate protein folding. The chain is Chaperonin GroEL from Listeria innocua serovar 6a (strain ATCC BAA-680 / CLIP 11262).